The following is a 316-amino-acid chain: ATP synthase gamma chain (316 aa).

It belongs to the ATPase gamma chain family. In terms of assembly, F-type ATPases have 2 components, CF(1) - the catalytic core - and CF(0) - the membrane proton channel. CF(1) has five subunits: alpha(3), beta(3), gamma(1), delta(1), epsilon(1). CF(0) has three main subunits: a, b and c.

The protein resides in the cellular thylakoid membrane. In terms of biological role, produces ATP from ADP in the presence of a proton gradient across the membrane. The gamma chain is believed to be important in regulating ATPase activity and the flow of protons through the CF(0) complex. The protein is ATP synthase gamma chain of Prochlorococcus marinus (strain MIT 9215).